The chain runs to 512 residues: ETS translocation variant 3 (512 aa).

Positions 35 to 116 (IQLWHFILEL…KGKRFTYKFN (82 aa)) form a DNA-binding region, ETS. The disordered stretch occupies residues 136 to 222 (VPQSAPPVPT…NAIGGGGIGH (87 aa)). 3 positions are modified to phosphoserine: Ser139, Ser159, and Ser315. Residues 158 to 184 (HSPTNDVQPGRFSASSLTASGQESSNG) are compositionally biased toward polar residues. The tract at residues 336-512 (PEESTQFSIK…QGLATAAADA (177 aa)) is disordered. Composition is skewed to basic and acidic residues over residues 380-406 (IKVE…HTQE), 453-468 (DRPG…KEDA), and 479-491 (RWND…ELSK). Residue Lys381 forms a Glycyl lysine isopeptide (Lys-Gly) (interchain with G-Cter in SUMO2) linkage. Lys388 bears the N6-acetyllysine; alternate mark. Lys388 participates in a covalent cross-link: Glycyl lysine isopeptide (Lys-Gly) (interchain with G-Cter in SUMO2); alternate.

Belongs to the ETS family.

The protein localises to the nucleus. Its function is as follows. Transcriptional repressor that contribute to growth arrest during terminal macrophage differentiation by repressing target genes involved in Ras-dependent proliferation. Represses MMP1 promoter activity. In Homo sapiens (Human), this protein is ETS translocation variant 3 (ETV3).